The following is a 353-amino-acid chain: Photosystem II protein D1 (353 aa).

Residue T2 is modified to N-acetylthreonine. T2 bears the Phosphothreonine mark. 3 helical membrane passes run 29 to 46 (YIGW…TATS), 118 to 133 (HFLL…EWEL), and 142 to 156 (WIAV…AATA). H118 contributes to the chlorophyll a binding site. Y126 contacts pheophytin a. Residues D170 and E189 each contribute to the [CaMn4O5] cluster site. The helical transmembrane segment at 197 to 218 (FHMLGVAGVFGGSLFSAMHGSL) threads the bilayer. H198 contributes to the chlorophyll a binding site. Residues H215 and 264–265 (SF) each bind a quinone. H215 is a Fe cation binding site. Residue H272 coordinates Fe cation. A helical transmembrane segment spans residues 274–288 (FLAAWPVIGIWFTAL). The [CaMn4O5] cluster site is built by H332, E333, D342, and A344. A propeptide spanning residues 345–353 (AVEAPSTNG) is cleaved from the precursor.

The protein belongs to the reaction center PufL/M/PsbA/D family. In terms of assembly, PSII is composed of 1 copy each of membrane proteins PsbA, PsbB, PsbC, PsbD, PsbE, PsbF, PsbH, PsbI, PsbJ, PsbK, PsbL, PsbM, PsbT, PsbX, PsbY, PsbZ, Psb30/Ycf12, at least 3 peripheral proteins of the oxygen-evolving complex and a large number of cofactors. It forms dimeric complexes. Requires The D1/D2 heterodimer binds P680, chlorophylls that are the primary electron donor of PSII, and subsequent electron acceptors. It shares a non-heme iron and each subunit binds pheophytin, quinone, additional chlorophylls, carotenoids and lipids. D1 provides most of the ligands for the Mn4-Ca-O5 cluster of the oxygen-evolving complex (OEC). There is also a Cl(-1) ion associated with D1 and D2, which is required for oxygen evolution. The PSII complex binds additional chlorophylls, carotenoids and specific lipids. as cofactor. Post-translationally, tyr-161 forms a radical intermediate that is referred to as redox-active TyrZ, YZ or Y-Z. In terms of processing, C-terminally processed by CTPA; processing is essential to allow assembly of the oxygen-evolving complex and thus photosynthetic growth.

It is found in the plastid. The protein localises to the chloroplast thylakoid membrane. It catalyses the reaction 2 a plastoquinone + 4 hnu + 2 H2O = 2 a plastoquinol + O2. Functionally, photosystem II (PSII) is a light-driven water:plastoquinone oxidoreductase that uses light energy to abstract electrons from H(2)O, generating O(2) and a proton gradient subsequently used for ATP formation. It consists of a core antenna complex that captures photons, and an electron transfer chain that converts photonic excitation into a charge separation. The D1/D2 (PsbA/PsbD) reaction center heterodimer binds P680, the primary electron donor of PSII as well as several subsequent electron acceptors. The chain is Photosystem II protein D1 from Buxus microphylla (Littleleaf boxwood).